The following is a 244-amino-acid chain: MNIDLNADVGEGCASDSELLTLVSSANIACGFHAGDAQTMLTCVREALKNGVAIGAHPSFPDRDNFGRTAMVLPPETVYAQTLYQIGALGAIVQAQGGVMRHVKPHGMLYNQAAKDPHLAQAIAKAVHDYDPSLILVGLAGSELIRAGERHRLVTRQEVFADRGYQADGSLVPRMQPGALIHDEEQALAQTLDMVQAGRVKSVTGVWTTVTAQTVCIHGDGEYALAFARRLRAAFNARNIHVIA.

This sequence belongs to the LamB/PxpA family. In terms of assembly, forms a complex composed of PxpA, PxpB and PxpC.

The enzyme catalyses 5-oxo-L-proline + ATP + 2 H2O = L-glutamate + ADP + phosphate + H(+). Catalyzes the cleavage of 5-oxoproline to form L-glutamate coupled to the hydrolysis of ATP to ADP and inorganic phosphate. This Salmonella choleraesuis (strain SC-B67) protein is 5-oxoprolinase subunit A.